The following is a 906-amino-acid chain: MITGLITKIIGSRNDRYLKKLRKVADEINKLEPQMKALSDEELKAKTIEFKERLASGESLDKILVEAFAVVRNASERVFGMRQFDVQLIGGMVLNDNKIAEMRTGEGKTLTATLPAYLNALSGKGVHIITVNDYLAGRDAKWNAKLFEFLGLTVGINISGMSGDQKRAAYAADITYGTNNEFGFDYLRDNMAFEAQQRVMRSLHYAIIDEVDSILIDEARTPLIISGPTDGDATLYTELNTVIPMLTQQDKEDTEEYIGEGDFTVDEKNKQVLLTERGQEKVEVILQERGLLDENQSLYSAASISLLHHVNAALRAHTLFEKDVEYIVTEKGEVVIVDEHSGRTMPGRRWSEGLHQAVEAKEGVQIQNENQTLASITFQNYFRLYEKLAGMTGTADTEAFEFQSIYGLETIVIPTNQAMIRKDGGDLVYLTEQEKYQAIVDDIKPRLEKGQPILVGTVSIEHSELLSDLMDKAKIKHSVLNAKFHAKEADIIAQAGALGSVTIATNMAGRGTDIVLGGNLEARLDKLGDVSPKEIEAEKELWKEEHKKVLKAGGLYIVGTERHESRRIDNQLRGRSGRQGDPGESRFYLSMEDSLMRIFASEKVSNMMKKLGMEKGEAIEHPWVSRAIENAQRKVEGRNFDMRKSLLDFDDVSNEQRKVIYQQRNGVIDSEEITETIEQIWDDVFHNCVNEYVPPHSLTEQWDLEGLEQRLKADFLVDLPVRQWSIDDANLQEGSIREKVVEHAKASYLAKKEQVGPAIIGSFEKSVMLQTIDTLWKEHLAAMDHLRQGIHLRGYAQKDPKQEYKRESFELFLQMLENLKREVVVILSKVQVQSKEEADVIQEQRRQAEAKAQLEMKHAQVNKGEVVSDENTGDDTFVRNEKKVGRNEPCPCGSGKKYKQCHGKLD.

ATP contacts are provided by residues Gln87, 105-109 (GEGKT), and Asp513. The segment at 860–906 (QVNKGEVVSDENTGDDTFVRNEKKVGRNEPCPCGSGKKYKQCHGKLD) is disordered. Basic and acidic residues predominate over residues 876 to 886 (TFVRNEKKVGR). 4 residues coordinate Zn(2+): Cys890, Cys892, Cys901, and His902. The span at 896–906 (KKYKQCHGKLD) shows a compositional bias: basic residues.

This sequence belongs to the SecA family. As to quaternary structure, monomer and homodimer. Part of the essential Sec protein translocation apparatus which comprises SecA, SecYEG and auxiliary proteins SecDF-YajC and YidC. Zn(2+) serves as cofactor.

The protein localises to the cell inner membrane. The protein resides in the cytoplasm. The enzyme catalyses ATP + H2O + cellular proteinSide 1 = ADP + phosphate + cellular proteinSide 2.. Part of the Sec protein translocase complex. Interacts with the SecYEG preprotein conducting channel. Has a central role in coupling the hydrolysis of ATP to the transfer of proteins into and across the cell membrane, serving both as a receptor for the preprotein-SecB complex and as an ATP-driven molecular motor driving the stepwise translocation of polypeptide chains across the membrane. The sequence is that of Protein translocase subunit SecA from Psychromonas ingrahamii (strain DSM 17664 / CCUG 51855 / 37).